The primary structure comprises 380 residues: Queuine tRNA-ribosyltransferase (380 aa).

Catalysis depends on aspartate 96, which acts as the Proton acceptor. Substrate is bound by residues 96–100 (DSGGF), aspartate 150, glutamine 193, and glycine 220. The tract at residues 251–257 (GVGAPDS) is RNA binding. Aspartate 270 serves as the catalytic Nucleophile. Residues 275 to 279 (TRIAR) form an RNA binding; important for wobble base 34 recognition region. Cysteine 308, cysteine 310, cysteine 313, and histidine 339 together coordinate Zn(2+).

This sequence belongs to the queuine tRNA-ribosyltransferase family. In terms of assembly, homodimer. Within each dimer, one monomer is responsible for RNA recognition and catalysis, while the other monomer binds to the replacement base PreQ1. The cofactor is Zn(2+).

The enzyme catalyses 7-aminomethyl-7-carbaguanine + guanosine(34) in tRNA = 7-aminomethyl-7-carbaguanosine(34) in tRNA + guanine. It functions in the pathway tRNA modification; tRNA-queuosine biosynthesis. Functionally, catalyzes the base-exchange of a guanine (G) residue with the queuine precursor 7-aminomethyl-7-deazaguanine (PreQ1) at position 34 (anticodon wobble position) in tRNAs with GU(N) anticodons (tRNA-Asp, -Asn, -His and -Tyr). Catalysis occurs through a double-displacement mechanism. The nucleophile active site attacks the C1' of nucleotide 34 to detach the guanine base from the RNA, forming a covalent enzyme-RNA intermediate. The proton acceptor active site deprotonates the incoming PreQ1, allowing a nucleophilic attack on the C1' of the ribose to form the product. After dissociation, two additional enzymatic reactions on the tRNA convert PreQ1 to queuine (Q), resulting in the hypermodified nucleoside queuosine (7-(((4,5-cis-dihydroxy-2-cyclopenten-1-yl)amino)methyl)-7-deazaguanosine). The chain is Queuine tRNA-ribosyltransferase from Streptococcus sanguinis (strain SK36).